A 467-amino-acid chain; its full sequence is FAD-dependent oxidoreductase dbaF (467 aa).

Residues 1 to 20 (MKSVLASGALTLAFSLAALA) form the signal peptide. N96, N134, N337, N391, and N451 each carry an N-linked (GlcNAc...) asparagine glycan.

This sequence belongs to the beta-cyclopiazonate dehydrogenase family. FAD is required as a cofactor.

The protein operates within secondary metabolite biosynthesis. Its function is as follows. FAD-dependent oxidoreductase; part of the gene cluster that mediates the biosynthesis of the antibiotic 2,4-dihydroxy-3-methyl-6-(2-oxopropyl)benzaldehyde (DHMBA) and its derivatives. The direct non-reducing polyketide synthase dbaI product is 2,4-dihydroxy-3-methyl-6-(2-oxopropyl)benzaldehyde (DHMBA), produced by condensation of one acetyl-CoA starter unit with 4 malonyl-CoA units and one methylation step. The FAD-dependent monooxygenase dbaH is responsible for the synthesis of yellow pigments derived from the oxidation of DHMBA. The roles of dbaB, C, E and F have still to be determined. The polypeptide is FAD-dependent oxidoreductase dbaF (Emericella nidulans (strain FGSC A4 / ATCC 38163 / CBS 112.46 / NRRL 194 / M139) (Aspergillus nidulans)).